The primary structure comprises 249 residues: Aliphatic sulfonates import ATP-binding protein SsuB 2 (249 aa).

The region spanning valine 15 to phenylalanine 231 is the ABC transporter domain. Glycine 47–serine 54 provides a ligand contact to ATP.

The protein belongs to the ABC transporter superfamily. Aliphatic sulfonates importer (TC 3.A.1.17.2) family. As to quaternary structure, the complex is composed of two ATP-binding proteins (SsuB), two transmembrane proteins (SsuC) and a solute-binding protein (SsuA).

Its subcellular location is the cell inner membrane. It catalyses the reaction ATP + H2O + aliphatic sulfonate-[sulfonate-binding protein]Side 1 = ADP + phosphate + aliphatic sulfonateSide 2 + [sulfonate-binding protein]Side 1.. In terms of biological role, part of the ABC transporter complex SsuABC involved in aliphatic sulfonates import. Responsible for energy coupling to the transport system. This is Aliphatic sulfonates import ATP-binding protein SsuB 2 from Rhizobium johnstonii (strain DSM 114642 / LMG 32736 / 3841) (Rhizobium leguminosarum bv. viciae).